Reading from the N-terminus, the 526-residue chain is Rho guanine nucleotide exchange factor 3 (526 aa).

The interval 20–40 (ELPPASGPAKDAEEPSNKRVK) is disordered. A phosphoserine mark is found at Ser47 and Ser70. The region spanning 122–304 (KRQEAIFELS…QGIVAEINTK (183 aa)) is the DH domain. The PH domain maps to 291 to 449 (INIIQGIVAE…WLNCIRQAKE (159 aa)). Disordered stretches follow at residues 464 to 502 (EGSF…TSEV) and 507 to 526 (EHME…ESNV). Residues 466-475 (SFLNPTTGSR) are compositionally biased toward polar residues.

Interacts with RHOA and RHOB.

Its subcellular location is the cytoplasm. Acts as a guanine nucleotide exchange factor (GEF) for RhoA and RhoB GTPases. This is Rho guanine nucleotide exchange factor 3 (ARHGEF3) from Macaca fascicularis (Crab-eating macaque).